Here is a 535-residue protein sequence, read N- to C-terminus: Sterol 26-hydroxylase, mitochondrial (535 aa).

The N-terminal 36 residues, 1–36 (MAALGCARLRWALLGPRVAGCGLCPQGARAKAAIPT), are a transit peptide targeting the mitochondrion. Lys286 is modified (N6-acetyllysine). Residues 387-401 (PLLKAVLKETLRLYP) are sterol-binding. Heme is bound at residue Cys480. Residue Lys524 is modified to N6-acetyllysine.

Belongs to the cytochrome P450 family. As to quaternary structure, interacts with HSP70; this interaction is required for initial targeting to mitochondria. The cofactor is heme. Expressed in all tissues tested. Highest expression in liver and duodenum, followed by adrenal gland and lung. Low expression in kidney and spleen.

The protein localises to the mitochondrion inner membrane. It catalyses the reaction 5beta-cholestane-3alpha,7alpha,12alpha-triol + 6 reduced [adrenodoxin] + 3 O2 + 5 H(+) = (25R)-3alpha,7alpha,12alpha-trihydroxy-5beta-cholestan-26-oate + 6 oxidized [adrenodoxin] + 4 H2O. The enzyme catalyses cholestanol + 2 reduced [adrenodoxin] + O2 + 2 H(+) = (25R)-26-hydroxycholestanol + 2 oxidized [adrenodoxin] + H2O. The catalysed reaction is (25R)-3beta-hydroxycholest-5-en-7-one-26-al + 2 reduced [adrenodoxin] + O2 + H(+) = (25R)-3beta-hydroxycholest-5-en-7-one-26-oate + 2 oxidized [adrenodoxin] + H2O. It carries out the reaction (25R)-3beta,26-dihydroxycholest-5-en-7-one + 2 reduced [adrenodoxin] + O2 + 2 H(+) = (25R)-3beta-hydroxycholest-5-en-7-one-26-al + 2 oxidized [adrenodoxin] + 2 H2O. It catalyses the reaction 7-oxocholesterol + 2 reduced [adrenodoxin] + O2 + 2 H(+) = (25R)-3beta,26-dihydroxycholest-5-en-7-one + 2 oxidized [adrenodoxin] + H2O. The enzyme catalyses calciol + 2 reduced [adrenodoxin] + O2 + 2 H(+) = calcidiol + 2 oxidized [adrenodoxin] + H2O. The catalysed reaction is (25R)-5beta-cholestane-3alpha,7alpha,12alpha,26-tetrol + 2 reduced [adrenodoxin] + O2 + 2 H(+) = (25R)-3alpha,7alpha,12alpha-trihydroxy-5beta-cholestan-26-al + 2 oxidized [adrenodoxin] + 2 H2O. It carries out the reaction 2 reduced [adrenodoxin] + cholesterol + O2 + 2 H(+) = (25R)-cholest-5-ene-3beta,26-diol + 2 oxidized [adrenodoxin] + H2O. It catalyses the reaction (25R)-3beta,4beta-dihydroxycholest-5-en-26-al + 2 reduced [adrenodoxin] + O2 + H(+) = (25R)-3beta,4beta-dihydroxycholest-5-en-26-oate + 2 oxidized [adrenodoxin] + H2O. The enzyme catalyses (25R)-4beta,26-dihydroxycholesterol + 2 reduced [adrenodoxin] + O2 + 2 H(+) = (25R)-3beta,4beta-dihydroxycholest-5-en-26-al + 2 oxidized [adrenodoxin] + 2 H2O. The catalysed reaction is 4beta-hydroxycholesterol + 2 reduced [adrenodoxin] + O2 + 2 H(+) = (25R)-4beta,26-dihydroxycholesterol + 2 oxidized [adrenodoxin] + H2O. It carries out the reaction (25R)-3beta-hydroxy-5-cholesten-26-al + 2 reduced [adrenodoxin] + O2 + H(+) = (25R)-3beta-hydroxy-5-cholestenoate + 2 oxidized [adrenodoxin] + H2O. It catalyses the reaction (25R)-cholest-5-ene-3beta,26-diol + 2 reduced [adrenodoxin] + O2 + 2 H(+) = (25R)-3beta-hydroxy-5-cholesten-26-al + 2 oxidized [adrenodoxin] + 2 H2O. The enzyme catalyses (25R)-3alpha,7alpha,12alpha-trihydroxy-5beta-cholestan-26-al + 2 reduced [adrenodoxin] + O2 + H(+) = (25R)-3alpha,7alpha,12alpha-trihydroxy-5beta-cholestan-26-oate + 2 oxidized [adrenodoxin] + H2O. The catalysed reaction is 5beta-cholestane-3alpha,7alpha,12alpha-triol + 2 reduced [adrenodoxin] + O2 + 2 H(+) = (25R)-5beta-cholestane-3alpha,7alpha,12alpha,26-tetrol + 2 oxidized [adrenodoxin] + H2O. The protein operates within hormone biosynthesis; cholecalciferol biosynthesis. Its pathway is steroid metabolism; cholesterol degradation. It functions in the pathway lipid metabolism; bile acid biosynthesis. Cytochrome P450 monooxygenase that catalyzes regio- and stereospecific hydroxylation of cholesterol and its derivatives. Hydroxylates (with R stereochemistry) the terminal methyl group of cholesterol side-chain in a three step reaction to yield at first a C26 alcohol, then a C26 aldehyde and finally a C26 acid. Regulates cholesterol homeostasis by catalyzing the conversion of excess cholesterol to bile acids via both the 'neutral' (classic) and the 'acid' (alternative) pathways. May also regulate cholesterol homeostasis via generation of active oxysterols, which act as ligands for NR1H2 and NR1H3 nuclear receptors, modulating the transcription of genes involved in lipid metabolism. Plays a role in cholestanol metabolism in the cerebellum. Similarly to cholesterol, hydroxylates cholestanol and may facilitate sterol diffusion through the blood-brain barrier to the systemic circulation for further degradation. Also hydroxylates retinal 7-ketocholesterol, a noxious oxysterol with pro-inflammatory and pro-apoptotic effects, and may play a role in its elimination from the retinal pigment epithelium. May play a redundant role in vitamin D biosynthesis. Catalyzes 25-hydroxylation of vitamin D3 that is required for its conversion to a functionally active form. The protein is Sterol 26-hydroxylase, mitochondrial (CYP27A1) of Oryctolagus cuniculus (Rabbit).